The primary structure comprises 705 residues: GATOR2 complex protein WDR24 (705 aa).

WD repeat units lie at residues Met1–Gln28, Glu34–Thr74, Gly77–Arg117, Ala121–Ile161, Gln165–Ala207, and Glu211–Ala254. The C4-type zinc finger occupies Asn633–Ala655. The Zn(2+) site is built by Cys634, Cys637, Cys648, Cys651, Cys658, Cys661, Cys672, Cys675, His677, His680, His683, Cys694, Cys698, His700, and Cys702. The RING-type; atypical zinc finger occupies Ser656–Thr705.

The protein belongs to the WD repeat WDR24 family. As to quaternary structure, component of the GATOR2 subcomplex, composed of MIOS, SEC13, SEH1L, WDR24 and WDR59. The GATOR2 complex interacts with CASTOR1 and CASTOR2; the interaction is negatively regulated by arginine. The GATOR2 complex interacts with SESN1, SESN2 and SESN3; the interaction is negatively regulated by amino acids.

Its subcellular location is the lysosome membrane. It catalyses the reaction S-ubiquitinyl-[E2 ubiquitin-conjugating enzyme]-L-cysteine + [acceptor protein]-L-lysine = [E2 ubiquitin-conjugating enzyme]-L-cysteine + N(6)-ubiquitinyl-[acceptor protein]-L-lysine.. Its pathway is protein modification; protein ubiquitination. With respect to regulation, the GATOR2 complex is negatively regulated by the upstream amino acid sensors CASTOR1 and SESN2, which sequester the GATOR2 complex in absence of amino acids. In the presence of abundant amino acids, GATOR2 is released from CASTOR1 and SESN2 and activated. Catalytic component of the GATOR2 complex, a multiprotein complex that acts as an activator of the amino acid-sensing branch of the mTORC1 signaling pathway. The GATOR2 complex indirectly activates mTORC1 through the inhibition of the GATOR1 subcomplex. GATOR2 probably acts as an E3 ubiquitin-protein ligase toward GATOR1. In the presence of abundant amino acids, the GATOR2 complex mediates ubiquitination of the NPRL2 core component of the GATOR1 complex, leading to GATOR1 inactivation. In the absence of amino acids, GATOR2 is inhibited, activating the GATOR1 complex. In addition to its role in regulation of the mTORC1 complex, promotes the acidification of lysosomes and facilitates autophagic flux. Within the GATOR2 complex, WDR24 constitutes the catalytic subunit that mediates 'Lys-6'-linked ubiquitination of NPRL2. The chain is GATOR2 complex protein WDR24 from Gallus gallus (Chicken).